Here is a 645-residue protein sequence, read N- to C-terminus: Ethylene response sensor 2 (645 aa).

4 consecutive transmembrane segments (helical) span residues 5–25, 54–74, 86–106, and 125–145; these read LLVQWLVFFFFFLIGSVVTAA, VGDFLIAIAYFSIPIELVYFV, VVCEFIAFIVLCGMTHLLAGF, and LTGIVSFLTALSLVTLLPLLL. Cys-97 and His-101 together coordinate Cu cation. Residues 190–346 form the GAF domain; the sequence is DRHTILYTTL…VVADQVAVAI (157 aa). One can recognise a Histidine kinase domain in the interval 389 to 623; sequence MMSDAMRCPV…VFRFQLRRSM (235 aa).

Belongs to the ethylene receptor family. Heteromer with ETR1. Requires Cu cation as cofactor. Post-translationally, autophosphorylated predominantly on Ser residues. As to expression, expressed in etiolated seedlings, leaves, roots and stems. Highly expressed in flowers, stamens, pollen cells, tapetum cells, carpels and ovules.

It localises to the endoplasmic reticulum membrane. Functionally, ethylene receptor related to bacterial two-component regulators. Acts as a redundant negative regulator of ethylene signaling. The protein is Ethylene response sensor 2 (ERS2) of Arabidopsis thaliana (Mouse-ear cress).